Reading from the N-terminus, the 540-residue chain is MRRFLINQAKGLVDHSRRQHHHKSPSFLSPQPRPLASSPPALSRFFSSTSEMSASDSTSSLPVTLDSINPKVLKCEYAVRGEIVNIAQKLQEDLKTNKDAYPFDEIIYCNIGNPQSLGQLPIKFFREVLALCDHASLLDESETHGLFSTDSIDRAWRILDHIPGRATGAYSHSQGIKGLRDVIAAGIEARDGFPADPNDIFLTDGASPAVHMMMQLLLSSEKDGILSPIPQYPLYSASIALHGGSLVPYYLDEATGWGLEISDLKKQLEEARSKGISVRALVVINPGNPTGQVLAEENQRDIVNFCKQEGLVLLADEVYQENVYVPDKKFHSFKKVARSLGYGEKDISLVSFQSVSKGYYGECGKRGGYMEVTGFTSDVREQIYKMASVNLCSNISGQILASLVMSPPKPGDDSYDSYMAERDGILSSMAKRAKTLEDALNSLEGVTCNRAEGAMYLFPRINLPQKAIEAAEAEKTAPDAFYCKRLLNATGVVVVPGSGFGQVPGTWHFRCTILPQEDKIPAIVNRLTEFHKSFMDEFRN.

A mitochondrion-targeting transit peptide spans 1–46 (MRRFLINQAKGLVDHSRRQHHHKSPSFLSPQPRPLASSPPALSRFF). The segment at 11-40 (GLVDHSRRQHHHKSPSFLSPQPRPLASSPP) is disordered. Low complexity predominate over residues 28–40 (LSPQPRPLASSPP). An N6-(pyridoxal phosphate)lysine modification is found at Lys357.

It belongs to the class-I pyridoxal-phosphate-dependent aminotransferase family. Alanine aminotransferase subfamily. In terms of assembly, homodimer. The cofactor is pyridoxal 5'-phosphate. Post-translationally, the N-terminus is blocked. As to expression, expressed in shoots, essentially in leaves and flowers, mostly in vascular tissues. Also detected in stems and roots.

The protein resides in the mitochondrion. It catalyses the reaction L-alanine + 2-oxoglutarate = pyruvate + L-glutamate. Its pathway is photosynthesis; C4 acid pathway. It functions in the pathway amino-acid degradation; L-alanine degradation via transaminase pathway; pyruvate from L-alanine: step 1/1. The sequence is that of Alanine aminotransferase 2, mitochondrial (ALAAT2) from Arabidopsis thaliana (Mouse-ear cress).